Here is a 257-residue protein sequence, read N- to C-terminus: Imidazole glycerol phosphate synthase subunit HisF (257 aa).

Residues aspartate 12 and aspartate 131 contribute to the active site.

Belongs to the HisA/HisF family. In terms of assembly, heterodimer of HisH and HisF.

The protein localises to the cytoplasm. The enzyme catalyses 5-[(5-phospho-1-deoxy-D-ribulos-1-ylimino)methylamino]-1-(5-phospho-beta-D-ribosyl)imidazole-4-carboxamide + L-glutamine = D-erythro-1-(imidazol-4-yl)glycerol 3-phosphate + 5-amino-1-(5-phospho-beta-D-ribosyl)imidazole-4-carboxamide + L-glutamate + H(+). The protein operates within amino-acid biosynthesis; L-histidine biosynthesis; L-histidine from 5-phospho-alpha-D-ribose 1-diphosphate: step 5/9. Its function is as follows. IGPS catalyzes the conversion of PRFAR and glutamine to IGP, AICAR and glutamate. The HisF subunit catalyzes the cyclization activity that produces IGP and AICAR from PRFAR using the ammonia provided by the HisH subunit. In Paraburkholderia xenovorans (strain LB400), this protein is Imidazole glycerol phosphate synthase subunit HisF.